We begin with the raw amino-acid sequence, 612 residues long: RNA polymerase sigma factor RpoD (612 aa).

Over residues 191–206 (QQNNEEDEENNQEDHE) the composition is skewed to acidic residues. The interval 191–210 (QQNNEEDEENNQEDHEDDHS) is disordered. A sigma-70 factor domain-2 region spans residues 378–448 (MVEANLRLVI…TRSIADQART (71 aa)). An Interaction with polymerase core subunit RpoC motif is present at residues 402–405 (DLIQ). The sigma-70 factor domain-3 stretch occupies residues 457-533 (ETINKLNRIS…DTTLELPLDS (77 aa)). Positions 546–599 (VLSGLTAREAKVLRMRFGIDMNTDHTLEEVGKQFDVTRERIRQIEAKALRKLRH) are sigma-70 factor domain-4. Residues 572–591 (LEEVGKQFDVTRERIRQIEA) constitute a DNA-binding region (H-T-H motif).

The protein belongs to the sigma-70 factor family. RpoD/SigA subfamily. As to quaternary structure, interacts transiently with the RNA polymerase catalytic core.

It is found in the cytoplasm. Its function is as follows. Sigma factors are initiation factors that promote the attachment of RNA polymerase to specific initiation sites and are then released. This sigma factor is the primary sigma factor during exponential growth. This chain is RNA polymerase sigma factor RpoD, found in Buchnera aphidicola subsp. Acyrthosiphon pisum (strain APS) (Acyrthosiphon pisum symbiotic bacterium).